We begin with the raw amino-acid sequence, 199 residues long: Probable thymidylate kinase (199 aa).

13-20 (GIDGAGKT) lines the ATP pocket.

Belongs to the thymidylate kinase family.

The catalysed reaction is dTMP + ATP = dTDP + ADP. This Staphylothermus marinus (strain ATCC 43588 / DSM 3639 / JCM 9404 / F1) protein is Probable thymidylate kinase.